The following is a 451-amino-acid chain: Bifunctional protein GlmU (451 aa).

The segment at 1–230 (MNNPIAAIVL…PADVGGINSR (230 aa)) is pyrophosphorylase. UDP-N-acetyl-alpha-D-glucosamine-binding positions include 10–13 (LAAG), lysine 24, glutamine 74, 79–80 (GT), 102–104 (YGD), glycine 142, glutamate 156, asparagine 171, and asparagine 228. Mg(2+) is bound at residue aspartate 104. Asparagine 228 lines the Mg(2+) pocket. The segment at 231-251 (AELAAAEAQWQAFRREEAMAA) is linker. Residues 252–451 (GASLRAPETV…RKKKAAEQKK (200 aa)) form an N-acetyltransferase region. UDP-N-acetyl-alpha-D-glucosamine is bound by residues arginine 317 and lysine 335. Histidine 347 acts as the Proton acceptor in catalysis. Tyrosine 350 and asparagine 361 together coordinate UDP-N-acetyl-alpha-D-glucosamine. Residues alanine 364, 370 to 371 (NY), serine 389, alanine 407, and arginine 424 each bind acetyl-CoA.

In the N-terminal section; belongs to the N-acetylglucosamine-1-phosphate uridyltransferase family. It in the C-terminal section; belongs to the transferase hexapeptide repeat family. In terms of assembly, homotrimer. The cofactor is Mg(2+).

The protein localises to the cytoplasm. The enzyme catalyses alpha-D-glucosamine 1-phosphate + acetyl-CoA = N-acetyl-alpha-D-glucosamine 1-phosphate + CoA + H(+). It catalyses the reaction N-acetyl-alpha-D-glucosamine 1-phosphate + UTP + H(+) = UDP-N-acetyl-alpha-D-glucosamine + diphosphate. It participates in nucleotide-sugar biosynthesis; UDP-N-acetyl-alpha-D-glucosamine biosynthesis; N-acetyl-alpha-D-glucosamine 1-phosphate from alpha-D-glucosamine 6-phosphate (route II): step 2/2. It functions in the pathway nucleotide-sugar biosynthesis; UDP-N-acetyl-alpha-D-glucosamine biosynthesis; UDP-N-acetyl-alpha-D-glucosamine from N-acetyl-alpha-D-glucosamine 1-phosphate: step 1/1. The protein operates within bacterial outer membrane biogenesis; LPS lipid A biosynthesis. Its function is as follows. Catalyzes the last two sequential reactions in the de novo biosynthetic pathway for UDP-N-acetylglucosamine (UDP-GlcNAc). The C-terminal domain catalyzes the transfer of acetyl group from acetyl coenzyme A to glucosamine-1-phosphate (GlcN-1-P) to produce N-acetylglucosamine-1-phosphate (GlcNAc-1-P), which is converted into UDP-GlcNAc by the transfer of uridine 5-monophosphate (from uridine 5-triphosphate), a reaction catalyzed by the N-terminal domain. In Sphingopyxis alaskensis (strain DSM 13593 / LMG 18877 / RB2256) (Sphingomonas alaskensis), this protein is Bifunctional protein GlmU.